The following is a 289-amino-acid chain: Diaminopimelate epimerase (289 aa).

3 residues coordinate substrate: Asn13, Gln47, and Asn67. Cys76 (proton donor) is an active-site residue. Residues 77 to 78 (GN), Asn167, Asn200, and 218 to 219 (ER) contribute to the substrate site. Residue Cys227 is the Proton acceptor of the active site. 228–229 (GT) lines the substrate pocket.

This sequence belongs to the diaminopimelate epimerase family. In terms of assembly, homodimer.

The protein resides in the cytoplasm. The enzyme catalyses (2S,6S)-2,6-diaminopimelate = meso-2,6-diaminopimelate. Its pathway is amino-acid biosynthesis; L-lysine biosynthesis via DAP pathway; DL-2,6-diaminopimelate from LL-2,6-diaminopimelate: step 1/1. In terms of biological role, catalyzes the stereoinversion of LL-2,6-diaminopimelate (L,L-DAP) to meso-diaminopimelate (meso-DAP), a precursor of L-lysine and an essential component of the bacterial peptidoglycan. The protein is Diaminopimelate epimerase of Burkholderia ambifaria (strain ATCC BAA-244 / DSM 16087 / CCUG 44356 / LMG 19182 / AMMD) (Burkholderia cepacia (strain AMMD)).